The following is a 328-amino-acid chain: Probable cell division protein WhiA (328 aa).

Residues 275 to 308 (SLEELGQLASPPMTKDAVAGRIRRLLSMADKRAE) constitute a DNA-binding region (H-T-H motif).

Belongs to the WhiA family.

In terms of biological role, involved in cell division and chromosome segregation. In Corynebacterium urealyticum (strain ATCC 43042 / DSM 7109), this protein is Probable cell division protein WhiA.